A 253-amino-acid chain; its full sequence is Cyclin-C1-1 (253 aa).

The protein belongs to the cyclin family. Cyclin C subfamily.

This chain is Cyclin-C1-1 (CYCC1-1), found in Arabidopsis thaliana (Mouse-ear cress).